The following is a 220-amino-acid chain: Botcinic acid biosynthesis cluster B protein 12 (220 aa).

The protein operates within polyketide biosynthesis. Its function is as follows. Part of the gene cluster B that mediates the biosynthesis of botcinic acid and its botcinin derivatives, acetate-derived polyketides that contribute to virulence when combined with the sesquiterpene botrydial. Botcinic acid and its derivatives have been shown to induce chlorosis and necrosis during host plant infection, but also have antifungal activities. Two polyketide synthases, BOA6 and BOA9, are involved in the biosynthesis of botcinins. BOA6 mediates the formation of the per-methylated tetraketide core by condensation of four units of malonyl-CoA with one unit of acetyl-CoA, which would be methylated in activated methylene groups to yield a bicyclic acid intermediate that could then either be converted to botrylactone derivatives or lose the starter acetate unit through a retro-Claisen type C-C bond cleavage to yield botcinin derivatives. The second polyketide synthase, BOA9, is probably required for the biosynthesis of the tetraketide side chain of botcinins. The methyltransferase (MT) domain within BOA6 is probably responsible for the incorporation of four methyl groups. The trans-enoyl reductase BOA5 might take over the enoyl reductase function of BOA6 that misses an ER domain. The monooxygenases BOA2, BOA3 and BOA4 might be involved in further hydroxylations at C4, C5 and C8, whereas BOA7, close to BOA9, could potentially be involved in the hydroxylation at C4 in the side chain of botcinins. The protein is Botcinic acid biosynthesis cluster B protein 12 of Botryotinia fuckeliana (strain B05.10) (Noble rot fungus).